A 491-amino-acid chain; its full sequence is Probable G-protein coupled receptor Mth-like 7 (491 aa).

A signal peptide spans 1-22 (MRLPWVIFCTVLLLIFTNNSNA). N-linked (GlcNAc...) asparagine glycans are attached at residues asparagine 18 and asparagine 42. The Extracellular segment spans residues 23 to 167 (DIPGCNYYDT…EEVSIQIFNK (145 aa)). Disulfide bonds link cysteine 27/cysteine 80, cysteine 82/cysteine 87, and cysteine 92/cysteine 103. Residues 168–188 (CGLIVWFQDGKFWVTVDLFME) form a helical membrane-spanning segment. Residues 189–222 (KQDYCLYRHNFDSDFPKSMWIIRHRCTSHISPGS) lie on the Cytoplasmic side of the membrane. A helical membrane pass occupies residues 223–243 (LEILIITMICFVLTIAVYLYI). The Extracellular segment spans residues 244 to 252 (KKLRNVTGK). Asparagine 248 is a glycosylation site (N-linked (GlcNAc...) asparagine). The chain crosses the membrane as a helical span at residues 253 to 273 (CIVCCIVSRFIQCLIMILDHL). Residues 274-325 (NLLNGICSPAGYSSHFFRMASNLWLSVISYHTWKVLTSLNRVDPNYRFLRYN) lie on the Cytoplasmic side of the membrane. A helical membrane pass occupies residues 326 to 346 (AFVWSTAAIMTGSIYIVNQIW). Topologically, residues 347-372 (ENDPSKWNWLPLVGFIRCSVKDWHPS) are extracellular. A helical transmembrane segment spans residues 373 to 393 (VWIYISGPSLALSTFNVAMFA). Over 394-434 (LTAIYIRKVKGGINKFTNEEEGRINCINFDSQTYLQFLRLS) the chain is Cytoplasmic. The helical transmembrane segment at 435–455 (IVMGLTWIFNVIPYSARLHIF) threads the bilayer. The Extracellular portion of the chain corresponds to 456–458 (WEW). The chain crosses the membrane as a helical span at residues 459-479 (VGIISEYFHSAFGIVLFVLLV). Residues 480 to 491 (LKRSTWTLMMDS) are Cytoplasmic-facing.

This sequence belongs to the G-protein coupled receptor 2 family. Mth subfamily.

It is found in the cell membrane. The chain is Probable G-protein coupled receptor Mth-like 7 (mthl7) from Drosophila melanogaster (Fruit fly).